Here is a 783-residue protein sequence, read N- to C-terminus: Isoamylase 1, chloroplastic (783 aa).

A chloroplast-targeting transit peptide spans 1–43; it reads MDAIKCSSSFLHHTKLNTLFSNHTFPKISAPNFKPLFRPISIS. Catalysis depends on Asp-410, which acts as the Nucleophile. Glu-466 functions as the Proton donor in the catalytic mechanism.

This sequence belongs to the glycosyl hydrolase 13 family. As to quaternary structure, associates with ISA2 to form the heteromultimeric complex Iso1 required for amylopectin synthesis.

The protein resides in the plastid. It is found in the chloroplast. The enzyme catalyses Hydrolysis of (1-&gt;6)-alpha-D-glucosidic branch linkages in glycogen, amylopectin and their beta-limit dextrins.. It functions in the pathway glycan biosynthesis; starch biosynthesis. Involved in the trimming of pre-amylopectin chains. Accelerates the crystallization of nascent amylopectin molecules during starch synthesis. ISA1 and ISA2 work exclusively together as a multimeric holoenzyme. ISA1-ISA2 removes preferentially branches that are very close to other branches. Promotes negative gravitropic responses in shoots by facilitating starch granules (statoliths) formation in hypocotyls. The sequence is that of Isoamylase 1, chloroplastic from Arabidopsis thaliana (Mouse-ear cress).